Reading from the N-terminus, the 477-residue chain is C3a anaphylatoxin chemotactic receptor (477 aa).

Residues 1-23 (MESFDADTNSTDLHSRPLFQPQD) are Extracellular-facing. Asn-9 is a glycosylation site (N-linked (GlcNAc...) asparagine). Residues 24–46 (IASMVILGLTCLLGLLGNGLVLW) traverse the membrane as a helical segment. Over 47 to 57 (VAGVKMKTTVN) the chain is Cytoplasmic. The helical transmembrane segment at 58-80 (TVWFLHLTLADFLCCLSLPFSLA) threads the bilayer. The Extracellular portion of the chain corresponds to 81–96 (HLILQGHWPYGLFLCK). Cysteines 95 and 172 form a disulfide. A helical transmembrane segment spans residues 97-118 (LIPSIIILNMFASVFLLTAISL). Residues 119–139 (DRCLIVHKPIWCQNHRNVRTA) lie on the Cytoplasmic side of the membrane. A helical transmembrane segment spans residues 140-160 (FAICGCVWVVAFVMCVPVFVY). Over 161–333 (RDLFIMDNRS…TPLMAITITR (173 aa)) the chain is Extracellular. Asn-168 carries an N-linked (GlcNAc...) asparagine glycan. 2 positions are modified to sulfotyrosine: Tyr-174 and Tyr-184. N-linked (GlcNAc...) asparagine glycans are attached at residues Asn-197 and Asn-201. Tyr-312 carries the sulfotyrosine modification. Residues 334-353 (LVVGFLVPFFIMVICYSLIV) traverse the membrane as a helical segment. The Cytoplasmic portion of the chain corresponds to 354–370 (FRMRKTNFTKSRNKTFR). A helical membrane pass occupies residues 371-393 (VAVAVVTVFFICWTPYHLVGVLL). The Extracellular segment spans residues 394-410 (LITDPESSLGEAVMSWD). The chain crosses the membrane as a helical span at residues 411 to 431 (HMSIALASANSCFNPFLYALL). Over 432-477 (GKDFRKKARQSIKGILEAAFSEELTHSTNCTQDKASSKRNNMSTDV) the chain is Cytoplasmic. Residue Ser-452 is modified to Phosphoserine. The residue at position 456 (Thr-456) is a Phosphothreonine.

The protein belongs to the G-protein coupled receptor 1 family. In terms of assembly, interacts with VGF-derived peptide TLQP-21. As to expression, detected in varying levels in all tissues examined except the spleen. Especially abundant in heart and lung.

It localises to the cell membrane. In terms of biological role, receptor for the chemotactic and inflammatory peptide anaphylatoxin C3a. This receptor stimulates chemotaxis, granule enzyme release and superoxide anion production. This Mus musculus (Mouse) protein is C3a anaphylatoxin chemotactic receptor (C3ar1).